A 398-amino-acid chain; its full sequence is Na(+)/H(+) antiporter NhaA (398 aa).

The next 11 helical transmembrane spans lie at 14–34 (AAGVMLMMATVLALTFANWSV), 60–80 (LLLWINDGLMAIFFLLIGLEV), 96–116 (MLPLAAAVGGMVFPALFFLLF), 125–145 (VGWAIPAATDIAFAIGVLTLL), 155–175 (VFLLALAIIDDLGAILIIALF), 179–199 (QIFWPALGGAVLAVAALAYLN), 214–234 (IVLWVCILKCGVHATLAGVIV), 263–283 (FLIIPLFAFANAGIVLQGIVL), 292–312 (LGIAAGLLVGKPLGITLLSWL), 330–350 (IVAVSVLCGIGFTMSIFITLL), and 362–382 (YAKLGILLASGLAALLGYLAL).

Belongs to the NhaA Na(+)/H(+) (TC 2.A.33) antiporter family.

Its subcellular location is the cell inner membrane. The catalysed reaction is Na(+)(in) + 2 H(+)(out) = Na(+)(out) + 2 H(+)(in). Functionally, na(+)/H(+) antiporter that extrudes sodium in exchange for external protons. The protein is Na(+)/H(+) antiporter NhaA of Pectobacterium carotovorum subsp. carotovorum (strain PC1).